A 382-amino-acid polypeptide reads, in one-letter code: F-box protein At3g19470 (382 aa).

The F-box domain maps to 1–44; that stretch reads MYNLPRDLPEEVLCRIPLTSLRPVRSTCKKWSTLSKCGSFAKKH.

This Arabidopsis thaliana (Mouse-ear cress) protein is F-box protein At3g19470.